A 237-amino-acid polypeptide reads, in one-letter code: Purine nucleoside phosphorylase DeoD-type (237 aa).

A purine D-ribonucleoside is bound at residue His-4. Residues Gly-20, Arg-24, Arg-43, and 87–90 contribute to the phosphate site; that span reads RVGT. A purine D-ribonucleoside is bound by residues 179–181 and 203–204; these read EME and SD. Catalysis depends on Asp-204, which acts as the Proton donor.

This sequence belongs to the PNP/UDP phosphorylase family. In terms of assembly, homohexamer; trimer of homodimers.

The catalysed reaction is a purine D-ribonucleoside + phosphate = a purine nucleobase + alpha-D-ribose 1-phosphate. The enzyme catalyses a purine 2'-deoxy-D-ribonucleoside + phosphate = a purine nucleobase + 2-deoxy-alpha-D-ribose 1-phosphate. In terms of biological role, catalyzes the reversible phosphorolytic breakdown of the N-glycosidic bond in the beta-(deoxy)ribonucleoside molecules, with the formation of the corresponding free purine bases and pentose-1-phosphate. The chain is Purine nucleoside phosphorylase DeoD-type from Streptococcus pyogenes serotype M4 (strain MGAS10750).